We begin with the raw amino-acid sequence, 1109 residues long: Carbamoyl phosphate synthase large chain (1109 aa).

The segment at 1–402 (MPRRTDLTSV…ALQKAMRSID (402 aa)) is carboxyphosphate synthetic domain. ATP-binding residues include Arg-129, Arg-169, Gly-175, Gly-176, Glu-208, Ile-210, Glu-215, Gly-241, Val-242, His-243, Gln-285, and Glu-299. In terms of domain architecture, ATP-grasp 1 spans 133 to 328 (KGVVERCGAE…IAKIAARLAV (196 aa)). Residues Gln-285, Glu-299, and Asn-301 each contribute to the Mg(2+) site. Mn(2+)-binding residues include Gln-285, Glu-299, and Asn-301. Residues 403 to 548 (KAGSTFHWRG…YHYSSYDAET (146 aa)) form an oligomerization domain region. The segment at 549 to 956 (EVQPRDRPAV…AFAKSQAAAY (408 aa)) is carbamoyl phosphate synthetic domain. Positions 678-876 (GEVLVAAGLP…LAKAASLLMA (199 aa)) constitute an ATP-grasp 2 domain. The ATP site is built by Arg-714, Arg-760, Leu-762, Glu-767, Gly-792, Ile-793, His-794, Ser-795, Gln-835, and Glu-847. Gln-835, Glu-847, and Asn-849 together coordinate Mg(2+). Gln-835, Glu-847, and Asn-849 together coordinate Mn(2+). One can recognise an MGS-like domain in the interval 957–1102 (GGLPTSGRVF…QEHDAARAAR (146 aa)). An allosteric domain region spans residues 957–1109 (GGLPTSGRVF…AARETEGVHA (153 aa)).

Belongs to the CarB family. As to quaternary structure, composed of two chains; the small (or glutamine) chain promotes the hydrolysis of glutamine to ammonia, which is used by the large (or ammonia) chain to synthesize carbamoyl phosphate. Tetramer of heterodimers (alpha,beta)4. Mg(2+) is required as a cofactor. The cofactor is Mn(2+).

It carries out the reaction hydrogencarbonate + L-glutamine + 2 ATP + H2O = carbamoyl phosphate + L-glutamate + 2 ADP + phosphate + 2 H(+). The enzyme catalyses hydrogencarbonate + NH4(+) + 2 ATP = carbamoyl phosphate + 2 ADP + phosphate + 2 H(+). Its pathway is amino-acid biosynthesis; L-arginine biosynthesis; carbamoyl phosphate from bicarbonate: step 1/1. It functions in the pathway pyrimidine metabolism; UMP biosynthesis via de novo pathway; (S)-dihydroorotate from bicarbonate: step 1/3. In terms of biological role, large subunit of the glutamine-dependent carbamoyl phosphate synthetase (CPSase). CPSase catalyzes the formation of carbamoyl phosphate from the ammonia moiety of glutamine, carbonate, and phosphate donated by ATP, constituting the first step of 2 biosynthetic pathways, one leading to arginine and/or urea and the other to pyrimidine nucleotides. The large subunit (synthetase) binds the substrates ammonia (free or transferred from glutamine from the small subunit), hydrogencarbonate and ATP and carries out an ATP-coupled ligase reaction, activating hydrogencarbonate by forming carboxy phosphate which reacts with ammonia to form carbamoyl phosphate. This Beutenbergia cavernae (strain ATCC BAA-8 / DSM 12333 / CCUG 43141 / JCM 11478 / NBRC 16432 / NCIMB 13614 / HKI 0122) protein is Carbamoyl phosphate synthase large chain.